The following is a 198-amino-acid chain: Guanylate kinase (198 aa).

G2 is subject to N-acetylglycine. Residues 4–186 (PRPVVLSGPS…AYWALKEALS (183 aa)) form the Guanylate kinase-like domain. Residue 14-19 (GAGKST) coordinates ATP. 37–51 (SHTTRDPRPGEENGK) serves as a coordination point for substrate. Catalysis depends on residues R44, R137, and R148. 171–172 (ND) is an ATP binding site.

This sequence belongs to the guanylate kinase family. As to quaternary structure, monomer. Interacts with RD3.

Its subcellular location is the photoreceptor inner segment. The protein resides in the cytoplasm. The protein localises to the cytosol. It carries out the reaction GMP + ATP = GDP + ADP. Its activity is regulated as follows. Up-regulated by RD3. Catalyzes the phosphorylation of GMP to GDP. Essential enzyme for recycling GMP and indirectly, cyclic GMP (cGMP). Involved in the cGMP metabolism in photoreceptors. The polypeptide is Guanylate kinase (GUK1) (Sus scrofa (Pig)).